The primary structure comprises 240 residues: Phosphoribosylaminoimidazole-succinocarboxamide synthase (240 aa).

Belongs to the SAICAR synthetase family.

The catalysed reaction is 5-amino-1-(5-phospho-D-ribosyl)imidazole-4-carboxylate + L-aspartate + ATP = (2S)-2-[5-amino-1-(5-phospho-beta-D-ribosyl)imidazole-4-carboxamido]succinate + ADP + phosphate + 2 H(+). It participates in purine metabolism; IMP biosynthesis via de novo pathway; 5-amino-1-(5-phospho-D-ribosyl)imidazole-4-carboxamide from 5-amino-1-(5-phospho-D-ribosyl)imidazole-4-carboxylate: step 1/2. The polypeptide is Phosphoribosylaminoimidazole-succinocarboxamide synthase (Acidithiobacillus ferrooxidans (strain ATCC 23270 / DSM 14882 / CIP 104768 / NCIMB 8455) (Ferrobacillus ferrooxidans (strain ATCC 23270))).